Reading from the N-terminus, the 270-residue chain is Tryptophan synthase alpha chain (270 aa).

Catalysis depends on proton acceptor residues Glu-57 and Asp-68.

Belongs to the TrpA family. Tetramer of two alpha and two beta chains.

The catalysed reaction is (1S,2R)-1-C-(indol-3-yl)glycerol 3-phosphate + L-serine = D-glyceraldehyde 3-phosphate + L-tryptophan + H2O. The protein operates within amino-acid biosynthesis; L-tryptophan biosynthesis; L-tryptophan from chorismate: step 5/5. Functionally, the alpha subunit is responsible for the aldol cleavage of indoleglycerol phosphate to indole and glyceraldehyde 3-phosphate. This chain is Tryptophan synthase alpha chain, found in Mycobacterium bovis (strain ATCC BAA-935 / AF2122/97).